The following is a 203-amino-acid chain: Peptide deformylase (203 aa).

Residues cysteine 130 and histidine 173 each coordinate Fe cation. Glutamate 174 is a catalytic residue. Fe cation is bound at residue histidine 177.

The protein belongs to the polypeptide deformylase family. Fe(2+) serves as cofactor.

The enzyme catalyses N-terminal N-formyl-L-methionyl-[peptide] + H2O = N-terminal L-methionyl-[peptide] + formate. Removes the formyl group from the N-terminal Met of newly synthesized proteins. Requires at least a dipeptide for an efficient rate of reaction. N-terminal L-methionine is a prerequisite for activity but the enzyme has broad specificity at other positions. The polypeptide is Peptide deformylase (Streptococcus pneumoniae serotype 19F (strain G54)).